The primary structure comprises 280 residues: Phosphatidylglycerol--prolipoprotein diacylglyceryl transferase (280 aa).

The next 4 helical transmembrane spans lie at 30-50 (WYGLAYVAGILLGWLYARRII), 71-91 (FLLWAAGGIVLGGRIGYILFY), 106-126 (IWNGGMSFHGGLLGTTLAIII), and 132-152 (AIPLWSLFDVVAAVVPIGLFF). Residue Arg154 participates in a 1,2-diacyl-sn-glycero-3-phospho-(1'-sn-glycerol) binding. The next 3 helical transmembrane spans lie at 188–208 (QLYEAALEGIVLLVVLAWFVY), 217–237 (GLVTGIFVCGYAASRIFVEFF), and 251–271 (WLTMGMVLSLPMALVGIWAIA).

The protein belongs to the Lgt family.

It localises to the cell inner membrane. The catalysed reaction is L-cysteinyl-[prolipoprotein] + a 1,2-diacyl-sn-glycero-3-phospho-(1'-sn-glycerol) = an S-1,2-diacyl-sn-glyceryl-L-cysteinyl-[prolipoprotein] + sn-glycerol 1-phosphate + H(+). Its pathway is protein modification; lipoprotein biosynthesis (diacylglyceryl transfer). Functionally, catalyzes the transfer of the diacylglyceryl group from phosphatidylglycerol to the sulfhydryl group of the N-terminal cysteine of a prolipoprotein, the first step in the formation of mature lipoproteins. The protein is Phosphatidylglycerol--prolipoprotein diacylglyceryl transferase of Rhizobium meliloti (strain 1021) (Ensifer meliloti).